Consider the following 272-residue polypeptide: Exosome complex component MTR3 (272 aa).

Positions M1–L36 are disordered.

The protein belongs to the RNase PH family. Component of the RNA exosome core complex (Exo-9), composed of EXOSC1, EXOSC2, EXOSC3, EXOSC4, EXOSC5, EXOSC6, EXOSC7, EXOSC8 and EXOSC9; within the complex interacts with EXOSC1, EXOSC7 and EXOSC8. The catalytically inactive Exo-9 may associate with the catalytic subunit EXOSC10/RRP6. Exo-9 may associate with DIS3 to form the nucleolar exosome complex, or DIS3L to form the cytoplasmic exosome complex. Exo-9 is formed by a hexameric base ring consisting of the heterodimers EXOSC4-EXOSC9, EXOSC5-EXOSC8 and EXOSC6-EXOSC7, and a cap ring consisting of EXOSC1, EXOSC2 and EXOSC3. The RNA exosome complex associates with cofactors EXOSC10/RRP6, C1D/RRP47, MPHOSPH6/MPP6 and MTREX/MTR4.

It localises to the cytoplasm. It is found in the nucleus. Its subcellular location is the nucleolus. Its function is as follows. Non-catalytic component of the RNA exosome complex which has 3'-&gt;5' exoribonuclease activity and participates in a multitude of cellular RNA processing and degradation events. In the nucleus, the RNA exosome complex is involved in proper maturation of stable RNA species such as rRNA, snRNA and snoRNA, in the elimination of RNA processing by-products and non-coding 'pervasive' transcripts, such as antisense RNA species and promoter-upstream transcripts (PROMPTs), and of mRNAs with processing defects, thereby limiting or excluding their export to the cytoplasm. The RNA exosome may be involved in Ig class switch recombination (CSR) and/or Ig variable region somatic hypermutation (SHM) by targeting AICDA deamination activity to transcribed dsDNA substrates. In the cytoplasm, the RNA exosome complex is involved in general mRNA turnover and specifically degrades inherently unstable mRNAs containing AU-rich elements (AREs) within their 3' untranslated regions, and in RNA surveillance pathways, preventing translation of aberrant mRNAs. It seems to be involved in degradation of histone mRNA. The catalytic inactive RNA exosome core complex of 9 subunits (Exo-9) is proposed to play a pivotal role in the binding and presentation of RNA for ribonucleolysis, and to serve as a scaffold for the association with catalytic subunits and accessory proteins or complexes. This chain is Exosome complex component MTR3 (EXOSC6), found in Homo sapiens (Human).